A 276-amino-acid chain; its full sequence is Elongation factor Ts (276 aa).

An involved in Mg(2+) ion dislocation from EF-Tu region spans residues 80 to 83 (TDFV).

The protein belongs to the EF-Ts family.

It localises to the cytoplasm. Functionally, associates with the EF-Tu.GDP complex and induces the exchange of GDP to GTP. It remains bound to the aminoacyl-tRNA.EF-Tu.GTP complex up to the GTP hydrolysis stage on the ribosome. The chain is Elongation factor Ts from Acidothermus cellulolyticus (strain ATCC 43068 / DSM 8971 / 11B).